We begin with the raw amino-acid sequence, 82 residues long: Delta-conotoxin-like SmVIA (82 aa).

Positions 1–22 (MKLTCVMIVAVLFLIAWTFVTA) are cleaved as a signal peptide. Positions 23–49 (DDSRNGLKNLFPKARHEMKNPEASKLN) are excised as a propeptide. 3 disulfide bridges follow: Cys54-Cys69, Cys61-Cys73, and Cys68-Cys77. Pro65 carries the post-translational modification 4-hydroxyproline.

Belongs to the conotoxin O1 superfamily. Expressed by the venom duct.

Its subcellular location is the secreted. Its function is as follows. Delta-conotoxins bind to site 6 of voltage-gated sodium channels (Nav) and inhibit the inactivation process. This is Delta-conotoxin-like SmVIA from Conus stercusmuscarum (Fly-specked cone).